A 358-amino-acid chain; its full sequence is Peptide chain release factor 1 (358 aa).

At Gln-234 the chain carries N5-methylglutamine. A disordered region spans residues 283–306 (ERLHSERAGQRKSMVGSGDRSERI).

This sequence belongs to the prokaryotic/mitochondrial release factor family. Methylated by PrmC. Methylation increases the termination efficiency of RF1.

The protein localises to the cytoplasm. Its function is as follows. Peptide chain release factor 1 directs the termination of translation in response to the peptide chain termination codons UAG and UAA. The polypeptide is Peptide chain release factor 1 (Zymomonas mobilis subsp. mobilis (strain ATCC 31821 / ZM4 / CP4)).